A 103-amino-acid polypeptide reads, in one-letter code: Large ribosomal subunit protein bL25 (103 aa).

The protein belongs to the bacterial ribosomal protein bL25 family. Part of the 50S ribosomal subunit; part of the 5S rRNA/L5/L18/L25 subcomplex. Contacts the 5S rRNA. Binds to the 5S rRNA independently of L5 and L18.

In terms of biological role, this is one of the proteins that binds to the 5S RNA in the ribosome where it forms part of the central protuberance. The protein is Large ribosomal subunit protein bL25 of Blochmanniella floridana.